The primary structure comprises 273 residues: uncharacterized protein (273 aa).

The region spanning 29 to 131 is the AB hydrolase-1 domain; that stretch reads TLVCVHGFLS…VVLLCSSGYL (103 aa). Residues S102 and H254 contribute to the active site.

This sequence belongs to the DmpD/TodF/XylF esterase family.

This is an uncharacterized protein from Bacillus subtilis (strain 168).